Here is a 482-residue protein sequence, read N- to C-terminus: UDP-N-acetylmuramate--L-alanine ligase (482 aa).

129–135 contacts ATP; sequence GTHGKTT.

It belongs to the MurCDEF family.

It is found in the cytoplasm. It catalyses the reaction UDP-N-acetyl-alpha-D-muramate + L-alanine + ATP = UDP-N-acetyl-alpha-D-muramoyl-L-alanine + ADP + phosphate + H(+). The protein operates within cell wall biogenesis; peptidoglycan biosynthesis. Cell wall formation. This is UDP-N-acetylmuramate--L-alanine ligase from Acinetobacter baylyi (strain ATCC 33305 / BD413 / ADP1).